We begin with the raw amino-acid sequence, 498 residues long: Glutamyl-tRNA(Gln) amidotransferase subunit A (498 aa).

Catalysis depends on charge relay system residues K79 and S154. S178 functions as the Acyl-ester intermediate in the catalytic mechanism.

Belongs to the amidase family. GatA subfamily. In terms of assembly, heterotrimer of A, B and C subunits.

The enzyme catalyses L-glutamyl-tRNA(Gln) + L-glutamine + ATP + H2O = L-glutaminyl-tRNA(Gln) + L-glutamate + ADP + phosphate + H(+). Functionally, allows the formation of correctly charged Gln-tRNA(Gln) through the transamidation of misacylated Glu-tRNA(Gln) in organisms which lack glutaminyl-tRNA synthetase. The reaction takes place in the presence of glutamine and ATP through an activated gamma-phospho-Glu-tRNA(Gln). The polypeptide is Glutamyl-tRNA(Gln) amidotransferase subunit A (Psychrobacter cryohalolentis (strain ATCC BAA-1226 / DSM 17306 / VKM B-2378 / K5)).